Here is a 250-residue protein sequence, read N- to C-terminus: 2,3-bisphosphoglycerate-dependent phosphoglycerate mutase (250 aa).

Residues 10–17 (RHGESQWN), 23–24 (TG), Arg-62, 89–92 (ERHY), Lys-100, 116–117 (RR), and 185–186 (GN) contribute to the substrate site. The Tele-phosphohistidine intermediate role is filled by His-11. Glu-89 acts as the Proton donor/acceptor in catalysis.

This sequence belongs to the phosphoglycerate mutase family. BPG-dependent PGAM subfamily. In terms of assembly, homodimer.

It carries out the reaction (2R)-2-phosphoglycerate = (2R)-3-phosphoglycerate. It functions in the pathway carbohydrate degradation; glycolysis; pyruvate from D-glyceraldehyde 3-phosphate: step 3/5. Functionally, catalyzes the interconversion of 2-phosphoglycerate and 3-phosphoglycerate. This is 2,3-bisphosphoglycerate-dependent phosphoglycerate mutase from Cronobacter sakazakii (strain ATCC BAA-894) (Enterobacter sakazakii).